Consider the following 205-residue polypeptide: Probable GTP-binding protein EngB (205 aa).

Positions 25 to 199 constitute an EngB-type G domain; that stretch reads NGIEIAFIGY…KLSLNSSYKK (175 aa). Residues 33-40, 60-64, 78-81, 145-148, and 178-180 each bind GTP; these read GYSNTGKS, GRTQL, DLPG, TKCD, and FSS. 2 residues coordinate Mg(2+): serine 40 and threonine 62.

The protein belongs to the TRAFAC class TrmE-Era-EngA-EngB-Septin-like GTPase superfamily. EngB GTPase family. Mg(2+) serves as cofactor.

Necessary for normal cell division and for the maintenance of normal septation. In Buchnera aphidicola subsp. Acyrthosiphon pisum (strain 5A), this protein is Probable GTP-binding protein EngB.